The chain runs to 282 residues: Sulfur carrier protein FdhD (282 aa).

Residue C115 is the Cysteine persulfide intermediate of the active site.

This sequence belongs to the FdhD family.

The protein localises to the cytoplasm. In terms of biological role, required for formate dehydrogenase (FDH) activity. Acts as a sulfur carrier protein that transfers sulfur from IscS to the molybdenum cofactor prior to its insertion into FDH. This is Sulfur carrier protein FdhD from Streptomyces avermitilis (strain ATCC 31267 / DSM 46492 / JCM 5070 / NBRC 14893 / NCIMB 12804 / NRRL 8165 / MA-4680).